A 361-amino-acid polypeptide reads, in one-letter code: S-adenosylmethionine:tRNA ribosyltransferase-isomerase (361 aa).

Belongs to the QueA family. In terms of assembly, monomer.

It localises to the cytoplasm. It catalyses the reaction 7-aminomethyl-7-carbaguanosine(34) in tRNA + S-adenosyl-L-methionine = epoxyqueuosine(34) in tRNA + adenine + L-methionine + 2 H(+). It participates in tRNA modification; tRNA-queuosine biosynthesis. In terms of biological role, transfers and isomerizes the ribose moiety from AdoMet to the 7-aminomethyl group of 7-deazaguanine (preQ1-tRNA) to give epoxyqueuosine (oQ-tRNA). The protein is S-adenosylmethionine:tRNA ribosyltransferase-isomerase of Glaesserella parasuis serovar 5 (strain SH0165) (Haemophilus parasuis).